Here is a 279-residue protein sequence, read N- to C-terminus: MKIAYLGPRGSFCSVVAETAFVSEELFAYDSILDVIEAYDEGKCDFALVPIENSTEGTVNMSIDKIFHDSKATVVAEFVLPISQNLLALSKEGKIEHIYSHPQALAQTRNYLREHYPQAKVEITDSTSAAAEFVKNHPDLPIAAVANSYAAKMYDLEIVAKNIQDLAGNSTRFWLLGKEKKSFDLLKTGEKVSLALTLPDNLPGALHKAISVFAWRDIDMTKIESRPLRTRLGQYFFNIDLVNNEKNNLKIPYALEELSGLGVKVRLLGNYAVYSLGEG.

Residues 2 to 178 (KIAYLGPRGS…NSTRFWLLGK (177 aa)) enclose the Prephenate dehydratase domain. Residues 194 to 270 (LALTLPDNLP…LGVKVRLLGN (77 aa)) enclose the ACT domain.

The catalysed reaction is prephenate + H(+) = 3-phenylpyruvate + CO2 + H2O. It participates in amino-acid biosynthesis; L-phenylalanine biosynthesis; phenylpyruvate from prephenate: step 1/1. This chain is Prephenate dehydratase (pheA), found in Lactococcus lactis subsp. lactis (strain IL1403) (Streptococcus lactis).